The chain runs to 485 residues: Leukocyte receptor cluster member 9 (485 aa).

The C3H1-type zinc-finger motif lies at 8–35 (SEAPAVCRFFLEGRCRFGARCRQPHPGA). A disordered region spans residues 212–247 (ETRTGLDSSLETPEVDGPTKETGLNGTTELEMPDPS).

This Mus musculus (Mouse) protein is Leukocyte receptor cluster member 9 (Leng9).